Here is a 376-residue protein sequence, read N- to C-terminus: MRRLNKKKALNFVRELDAFPKVPESYVETTASGGTVSLLAFTAMALLAFFEFFVYRDTWMKYEYEVDKDFTSKLRINIDITVAMRCQFVGADVLDLAETMVASDGLVYEPVVFDLSPQQRLWHRTLLLIQGRLREEHSLQDVLFKNVMKGSPTALPPREDDPNQPLNACRIHGHLYVNKVAGNFHITVGKAIPHPRGHAHLAALVSHETYNFSHRIDHLSFGEEIPGILNPLDGTEKVSADHNQMFQYFITIVPTKLQTYKVYADTHQYSVTERERVINHAAGSHGVSGIFMKYDISSLMVKVTEQHMPFWQFLVRLCGIIGGIFSTTGMLHNLVGFCVDVVCCRFKLGVYKPKSMSDFDGQINSLTPLLSENAEQ.

Topologically, residues M1 to G33 are cytoplasmic. A helical membrane pass occupies residues G34–V54. Topologically, residues Y55–C318 are lumenal. A helical membrane pass occupies residues G319 to V339. The Cytoplasmic portion of the chain corresponds to D340–Q376.

The protein belongs to the ERGIC family.

The protein resides in the endoplasmic reticulum-Golgi intermediate compartment membrane. It localises to the golgi apparatus. Its subcellular location is the cis-Golgi network membrane. The protein localises to the endoplasmic reticulum membrane. Functionally, possible role in transport between endoplasmic reticulum and Golgi. This chain is Endoplasmic reticulum-Golgi intermediate compartment protein 2 (ergic2), found in Danio rerio (Zebrafish).